A 257-amino-acid chain; its full sequence is Pantothenate synthetase (257 aa).

Residue 29 to 36 participates in ATP binding; it reads MGNLHAGH. Catalysis depends on His-36, which acts as the Proton donor. Position 60 (Gln-60) interacts with (R)-pantoate. Residue Gln-60 participates in beta-alanine binding. 145–148 contributes to the ATP binding site; it reads GEKD. Gln-151 contacts (R)-pantoate. ATP contacts are provided by residues Val-174 and 182–185; that span reads LSSR.

This sequence belongs to the pantothenate synthetase family. As to quaternary structure, homodimer.

Its subcellular location is the cytoplasm. The catalysed reaction is (R)-pantoate + beta-alanine + ATP = (R)-pantothenate + AMP + diphosphate + H(+). It participates in cofactor biosynthesis; (R)-pantothenate biosynthesis; (R)-pantothenate from (R)-pantoate and beta-alanine: step 1/1. In terms of biological role, catalyzes the condensation of pantoate with beta-alanine in an ATP-dependent reaction via a pantoyl-adenylate intermediate. The polypeptide is Pantothenate synthetase (Coxiella burnetii (strain CbuK_Q154) (Coxiella burnetii (strain Q154))).